Here is a 399-residue protein sequence, read N- to C-terminus: Acetate kinase (399 aa).

Asparagine 10 provides a ligand contact to Mg(2+). Lysine 17 serves as a coordination point for ATP. Arginine 91 contributes to the substrate binding site. Aspartate 148 functions as the Proton donor/acceptor in the catalytic mechanism. ATP-binding positions include 208–212 (HLGNG), 283–285 (DCR), and 331–335 (GIGEN). Position 385 (glutamate 385) interacts with Mg(2+).

This sequence belongs to the acetokinase family. Homodimer. Mg(2+) is required as a cofactor. It depends on Mn(2+) as a cofactor.

The protein localises to the cytoplasm. The catalysed reaction is acetate + ATP = acetyl phosphate + ADP. It participates in metabolic intermediate biosynthesis; acetyl-CoA biosynthesis; acetyl-CoA from acetate: step 1/2. Its function is as follows. Catalyzes the formation of acetyl phosphate from acetate and ATP. Can also catalyze the reverse reaction. The sequence is that of Acetate kinase from Shewanella baltica (strain OS223).